A 214-amino-acid chain; its full sequence is tRNA (guanine-N(7)-)-methyltransferase (214 aa).

Residues glutamate 43, glutamate 68, asparagine 99, and aspartate 121 each contribute to the S-adenosyl-L-methionine site. Residue aspartate 121 is part of the active site. Substrate-binding positions include lysine 125, aspartate 157, and 194–197; that span reads TEYE.

Belongs to the class I-like SAM-binding methyltransferase superfamily. TrmB family.

It carries out the reaction guanosine(46) in tRNA + S-adenosyl-L-methionine = N(7)-methylguanosine(46) in tRNA + S-adenosyl-L-homocysteine. It functions in the pathway tRNA modification; N(7)-methylguanine-tRNA biosynthesis. Functionally, catalyzes the formation of N(7)-methylguanine at position 46 (m7G46) in tRNA. This Alkaliphilus metalliredigens (strain QYMF) protein is tRNA (guanine-N(7)-)-methyltransferase.